The sequence spans 390 residues: Terminal nucleotidyltransferase 5C (390 aa).

Belongs to the TENT family.

Its subcellular location is the nucleus. It is found in the cytoplasm. The protein localises to the cytoskeleton. It localises to the microtubule organizing center. The protein resides in the centrosome. It carries out the reaction RNA(n) + ATP = RNA(n)-3'-adenine ribonucleotide + diphosphate. In terms of biological role, catalyzes the transfer of one adenosine molecule from an ATP to an mRNA poly(A) tail bearing a 3'-OH terminal group and enhances mRNA stability and gene expression. In Gallus gallus (Chicken), this protein is Terminal nucleotidyltransferase 5C.